A 217-amino-acid chain; its full sequence is MOB kinase activator-like 2 (217 aa).

The disordered stretch occupies residues 15–38 (GKESIRGNYKPKKHPRGSSRHTMR). Basic residues predominate over residues 23–38 (YKPKKHPRGSSRHTMR). Zn(2+) contacts are provided by C89, C94, H167, and H172.

It belongs to the MOB1/phocein family.

The sequence is that of MOB kinase activator-like 2 (mob2) from Dictyostelium discoideum (Social amoeba).